The primary structure comprises 388 residues: Flavin oxidoreductase hxnT (388 aa).

It belongs to the NADH:flavin oxidoreductase/NADH oxidase family. The cofactor is FMN.

Flavin oxidoreductase, part of the hnx cluster involved in the purine degradation. The nicotinate hydroxylase hnxS accepts nicotinate as a substrate and catalyzes the first step of nicotinate catabolism. The major facilitator-type transporters hxnP and hxnZ are probably involved in the uptake of nicotinate-derived metabolites, and the oxidoreductases hxnT and hxnY in the further metabolism of 6-OH nicotinic acid. The chain is Flavin oxidoreductase hxnT from Emericella nidulans (strain FGSC A4 / ATCC 38163 / CBS 112.46 / NRRL 194 / M139) (Aspergillus nidulans).